Here is a 60-residue protein sequence, read N- to C-terminus: Large ribosomal subunit protein bL32 (60 aa).

Belongs to the bacterial ribosomal protein bL32 family.

This Borrelia duttonii (strain Ly) protein is Large ribosomal subunit protein bL32.